The sequence spans 214 residues: MQLFHLCLIISCTCPTVQASKLCLGWLWGMDIDPYKEFGATVELLSFLPSDFFPSVRDLLDTASALYREALESPEHCSPHHTALRQAILCWGELMTLATWVGNNLQDPASRDLVVNYVNTNMGLKIRQLLWFHISCLTFGRETVLEYLVSFGVWIRTPPAYRPPNAPILSTLPETTVVRRRDRGRSPRRRTPSPRRRRSQSPRRRRSQSRESQC.

A signal peptide spans 1–19 (MQLFHLCLIISCTCPTVQA). Residues 25 to 27 (GWL) are HBEAG. The segment at 165 to 214 (NAPILSTLPETTVVRRRDRGRSPRRRTPSPRRRRSQSPRRRRSQSRESQC) is disordered. A compositionally biased stretch (basic residues) spans 178–207 (VRRRDRGRSPRRRTPSPRRRRSQSPRRRRS). The 1; half-length repeat unit spans residues 186–192 (SPRRRTP). The tract at residues 186–208 (SPRRRTPSPRRRRSQSPRRRRSQ) is 3 X 8 AA repeats of S-P-R-R-R-R-S-Q. A propeptide spanning residues 186 to 214 (SPRRRTPSPRRRRSQSPRRRRSQSRESQC) is cleaved from the precursor. Tandem repeats lie at residues 193–200 (SPRRRRSQ) and 201–208 (SPRRRRSQ).

This sequence belongs to the orthohepadnavirus precore antigen family. Homodimerizes. In terms of processing, phosphorylated. Cleaved by host furin.

It is found in the secreted. It localises to the host nucleus. May regulate immune response to the intracellular capsid in acting as a T-cell tolerogen, by having an immunoregulatory effect which prevents destruction of infected cells by cytotoxic T-cells. This immune regulation may predispose to chronicity during perinatal infections and prevent severe liver injury during adult infections. The protein is External core antigen of Homo sapiens (Human).